The following is a 470-amino-acid chain: Uronate isomerase (470 aa).

The protein belongs to the metallo-dependent hydrolases superfamily. Uronate isomerase family.

The catalysed reaction is D-glucuronate = D-fructuronate. It catalyses the reaction aldehydo-D-galacturonate = keto-D-tagaturonate. Its pathway is carbohydrate metabolism; pentose and glucuronate interconversion. The polypeptide is Uronate isomerase (Klebsiella pneumoniae (strain 342)).